The sequence spans 373 residues: NAD(P)H-quinone oxidoreductase subunit 1 (373 aa).

Transmembrane regions (helical) follow at residues 28 to 48 (LLWL…GVLV), 98 to 118 (LLFT…WLII), 129 to 149 (VGVG…GLLM), 167 to 187 (AAQS…IVMM), 205 to 225 (ILSW…ICAL), 267 to 287 (VLSA…PIPV), 309 to 329 (SVGI…AILL), and 348 to 368 (FLLP…LAFP).

The protein belongs to the complex I subunit 1 family. NDH-1 is composed of at least 11 different subunits.

The protein resides in the cellular thylakoid membrane. It catalyses the reaction a plastoquinone + NADH + (n+1) H(+)(in) = a plastoquinol + NAD(+) + n H(+)(out). It carries out the reaction a plastoquinone + NADPH + (n+1) H(+)(in) = a plastoquinol + NADP(+) + n H(+)(out). Functionally, NDH-1 shuttles electrons from an unknown electron donor, via FMN and iron-sulfur (Fe-S) centers, to quinones in the respiratory and/or the photosynthetic chain. The immediate electron acceptor for the enzyme in this species is believed to be plastoquinone. Couples the redox reaction to proton translocation, and thus conserves the redox energy in a proton gradient. In Parasynechococcus marenigrum (strain WH8102), this protein is NAD(P)H-quinone oxidoreductase subunit 1.